Reading from the N-terminus, the 126-residue chain is Aspartate 1-decarboxylase 2 (126 aa).

Residue S25 is the Schiff-base intermediate with substrate; via pyruvic acid of the active site. Pyruvic acid (Ser) is present on S25. T57 provides a ligand contact to substrate. Y58 functions as the Proton donor in the catalytic mechanism. Residue 73–75 coordinates substrate; that stretch reads GSA.

This sequence belongs to the PanD family. As to quaternary structure, heterooctamer of four alpha and four beta subunits. Pyruvate serves as cofactor. Post-translationally, is synthesized initially as an inactive proenzyme, which is activated by self-cleavage at a specific serine bond to produce a beta-subunit with a hydroxyl group at its C-terminus and an alpha-subunit with a pyruvoyl group at its N-terminus.

It is found in the cytoplasm. It catalyses the reaction L-aspartate + H(+) = beta-alanine + CO2. Its pathway is cofactor biosynthesis; (R)-pantothenate biosynthesis; beta-alanine from L-aspartate: step 1/1. Catalyzes the pyruvoyl-dependent decarboxylation of aspartate to produce beta-alanine. The protein is Aspartate 1-decarboxylase 2 of Polaromonas sp. (strain JS666 / ATCC BAA-500).